The primary structure comprises 246 residues: Orotidine 5'-phosphate decarboxylase (246 aa).

Substrate-binding positions include Asp-22, Lys-44, 71-80 (DLKFHDIPNT), Thr-131, Arg-192, Gln-201, Gly-221, and Arg-222. Lys-73 (proton donor) is an active-site residue.

Belongs to the OMP decarboxylase family. Type 1 subfamily. Homodimer.

It catalyses the reaction orotidine 5'-phosphate + H(+) = UMP + CO2. It participates in pyrimidine metabolism; UMP biosynthesis via de novo pathway; UMP from orotate: step 2/2. In terms of biological role, catalyzes the decarboxylation of orotidine 5'-monophosphate (OMP) to uridine 5'-monophosphate (UMP). This Yersinia enterocolitica serotype O:8 / biotype 1B (strain NCTC 13174 / 8081) protein is Orotidine 5'-phosphate decarboxylase.